The primary structure comprises 539 residues: Laccase-1 (539 aa).

Positions 1 to 21 (MAFTAISLFLAALGVINTAFA) are cleaved as a signal peptide. 2 Plastocyanin-like domains span residues 37–154 (AEVN…YDPE) and 166–309 (ESTV…HYLG). Asparagine 78 is a glycosylation site (N-linked (GlcNAc...) asparagine). Positions 88 and 90 each coordinate Cu cation. Intrachain disulfides connect cysteine 109–cysteine 513 and cysteine 141–cysteine 228. Asparagine 120 is a glycosylation site (N-linked (GlcNAc...) asparagine). Cu cation is bound by residues histidine 133 and histidine 135. Asparagine 202, asparagine 233, asparagine 240, asparagine 293, asparagine 318, asparagine 353, asparagine 385, and asparagine 405 each carry an N-linked (GlcNAc...) asparagine glycan. In terms of domain architecture, Plastocyanin-like 3 spans 374–495 (SPTVPVLLQI…GFAVVMAEDP (122 aa)). 3 residues coordinate Cu cation: histidine 421, histidine 424, and histidine 426. A glycan (N-linked (GlcNAc...) asparagine) is linked at asparagine 457. The Cu cation site is built by histidine 476, cysteine 477, histidine 478, and histidine 482. Asparagine 532 carries N-linked (GlcNAc...) asparagine glycosylation.

Belongs to the multicopper oxidase family. Cu cation serves as cofactor.

The protein localises to the secreted. The catalysed reaction is 4 hydroquinone + O2 = 4 benzosemiquinone + 2 H2O. Its activity is regulated as follows. Inhibited by chloride ions. Inhibited by citrate. Inhibited by oxalate. Activated by acetate. In vitro, has activity towards 2,2'-azino-bis(3-ethylbenzthiazoline-6-sulfonic acid) (ABTS), 2,6-dimethoxy-phenol, and guaiacol. Although brown rot fungi preferentially degrade hemicellulose and cellulose, the enzyme may contribute to generating small amounts of lignin breakdown products required for catalytic reactions. This is Laccase-1 from Fomitopsis schrenkii (Brown rot fungus).